The sequence spans 88 residues: Small ribosomal subunit protein uS17 (88 aa).

It belongs to the universal ribosomal protein uS17 family. As to quaternary structure, part of the 30S ribosomal subunit.

Its function is as follows. One of the primary rRNA binding proteins, it binds specifically to the 5'-end of 16S ribosomal RNA. The protein is Small ribosomal subunit protein uS17 of Yersinia pseudotuberculosis serotype O:1b (strain IP 31758).